Reading from the N-terminus, the 145-residue chain is Large ribosomal subunit protein uL11 (145 aa).

Belongs to the universal ribosomal protein uL11 family. Part of the ribosomal stalk of the 50S ribosomal subunit. Interacts with L10 and the large rRNA to form the base of the stalk. L10 forms an elongated spine to which L12 dimers bind in a sequential fashion forming a multimeric L10(L12)X complex. In terms of processing, one or more lysine residues are methylated.

Forms part of the ribosomal stalk which helps the ribosome interact with GTP-bound translation factors. The sequence is that of Large ribosomal subunit protein uL11 from Rickettsia typhi (strain ATCC VR-144 / Wilmington).